A 510-amino-acid chain; its full sequence is Secreted RxLR effector protein 108 (510 aa).

Positions Met1–Ala20 are cleaved as a signal peptide. N-linked (GlcNAc...) asparagine glycosylation is present at Asn47. The RxLR-dEER motif lies at Arg48 to Arg65. Disordered stretches follow at residues Arg111 to Thr139 and Lys386 to Lys442. A compositionally biased stretch (basic residues) spans Pro122–Lys137. A compositionally biased stretch (polar residues) spans Asp393 to Gln405. The span at Val429–Lys442 shows a compositional bias: basic and acidic residues.

It belongs to the RxLR effector family.

The protein resides in the secreted. The protein localises to the host nucleus. Functionally, secreted effector that completely suppresses the host cell death induced by cell death-inducing proteins. In Plasmopara viticola (Downy mildew of grapevine), this protein is Secreted RxLR effector protein 108.